The primary structure comprises 110 residues: UPF0251 protein PH0803 (110 aa).

This sequence belongs to the UPF0251 family.

This Pyrococcus horikoshii (strain ATCC 700860 / DSM 12428 / JCM 9974 / NBRC 100139 / OT-3) protein is UPF0251 protein PH0803.